The following is a 156-amino-acid chain: ATP synthase subunit b (156 aa).

The chain crosses the membrane as a helical span at residues 7 to 29 (LFAQMVVFLVLAWFTMKFVWPPL).

Belongs to the ATPase B chain family. F-type ATPases have 2 components, F(1) - the catalytic core - and F(0) - the membrane proton channel. F(1) has five subunits: alpha(3), beta(3), gamma(1), delta(1), epsilon(1). F(0) has three main subunits: a(1), b(2) and c(10-14). The alpha and beta chains form an alternating ring which encloses part of the gamma chain. F(1) is attached to F(0) by a central stalk formed by the gamma and epsilon chains, while a peripheral stalk is formed by the delta and b chains.

The protein resides in the cell inner membrane. Functionally, f(1)F(0) ATP synthase produces ATP from ADP in the presence of a proton or sodium gradient. F-type ATPases consist of two structural domains, F(1) containing the extramembraneous catalytic core and F(0) containing the membrane proton channel, linked together by a central stalk and a peripheral stalk. During catalysis, ATP synthesis in the catalytic domain of F(1) is coupled via a rotary mechanism of the central stalk subunits to proton translocation. Component of the F(0) channel, it forms part of the peripheral stalk, linking F(1) to F(0). This chain is ATP synthase subunit b, found in Burkholderia cenocepacia (strain ATCC BAA-245 / DSM 16553 / LMG 16656 / NCTC 13227 / J2315 / CF5610) (Burkholderia cepacia (strain J2315)).